The sequence spans 386 residues: Succinate--CoA ligase [ADP-forming] subunit beta (386 aa).

Positions 46, 99, 102, and 107 each coordinate ATP. 2 residues coordinate Mg(2+): Asn199 and Asp213. Substrate-binding positions include Asn264 and Gly321 to Met323.

This sequence belongs to the succinate/malate CoA ligase beta subunit family. Heterotetramer of two alpha and two beta subunits. The cofactor is Mg(2+).

It catalyses the reaction succinate + ATP + CoA = succinyl-CoA + ADP + phosphate. It carries out the reaction GTP + succinate + CoA = succinyl-CoA + GDP + phosphate. It participates in carbohydrate metabolism; tricarboxylic acid cycle; succinate from succinyl-CoA (ligase route): step 1/1. In terms of biological role, succinyl-CoA synthetase functions in the citric acid cycle (TCA), coupling the hydrolysis of succinyl-CoA to the synthesis of either ATP or GTP and thus represents the only step of substrate-level phosphorylation in the TCA. The beta subunit provides nucleotide specificity of the enzyme and binds the substrate succinate, while the binding sites for coenzyme A and phosphate are found in the alpha subunit. This is Succinate--CoA ligase [ADP-forming] subunit beta from Orientia tsutsugamushi (strain Boryong) (Rickettsia tsutsugamushi).